Reading from the N-terminus, the 230-residue chain is NAD(P)H-hydrate epimerase (230 aa).

The region spanning 11–218 (AIAVDQELFN…ALQRKYELNL (208 aa)) is the YjeF N-terminal domain. Residue 61–65 (NNGGD) coordinates (6S)-NADPHX. Positions 62 and 126 each coordinate K(+). Residues 130–136 (GFSFKPP) and Asp159 each bind (6S)-NADPHX. Residue Ser162 coordinates K(+).

The protein belongs to the NnrE/AIBP family. K(+) is required as a cofactor.

It carries out the reaction (6R)-NADHX = (6S)-NADHX. The catalysed reaction is (6R)-NADPHX = (6S)-NADPHX. Its function is as follows. Catalyzes the epimerization of the S- and R-forms of NAD(P)HX, a damaged form of NAD(P)H that is a result of enzymatic or heat-dependent hydration. This is a prerequisite for the S-specific NAD(P)H-hydrate dehydratase to allow the repair of both epimers of NAD(P)HX. In Drosophila sechellia (Fruit fly), this protein is NAD(P)H-hydrate epimerase.